A 128-amino-acid chain; its full sequence is MRHRKSGRQLNRNSSHRQALFRNLASALVSHEIIKTTLPKAKELRRVVEPLITLAKVDSVANRRLAFARTRNIETVAKLFNELGPRFAQRAGGYTRILKCGFRAGDNAPMAYIELVDRPALAEEAKTE.

The protein belongs to the bacterial ribosomal protein bL17 family. In terms of assembly, part of the 50S ribosomal subunit. Contacts protein L32.

This chain is Large ribosomal subunit protein bL17, found in Histophilus somni (strain 129Pt) (Haemophilus somnus).